The primary structure comprises 182 residues: Large ribosomal subunit protein eL15 (182 aa).

It belongs to the eukaryotic ribosomal protein eL15 family.

The polypeptide is Large ribosomal subunit protein eL15 (rpl15e) (Methanothermobacter thermautotrophicus (strain ATCC 29096 / DSM 1053 / JCM 10044 / NBRC 100330 / Delta H) (Methanobacterium thermoautotrophicum)).